The sequence spans 580 residues: E3 ubiquitin-protein ligase TRIM45 (580 aa).

The segment at C29–D98 adopts an RING-type zinc-finger fold. B box-type zinc fingers lie at residues G130–L176 and G186–T227. Zn(2+) is bound by residues C135, C138, C158, H162, C191, H194, C214, and H219. Residues V249–E329 are a coiled coil. A Filamin repeat occupies T394–V497.

Belongs to the TRIM/RBCC family.

Its subcellular location is the cytoplasm. The protein resides in the nucleus. It carries out the reaction S-ubiquitinyl-[E2 ubiquitin-conjugating enzyme]-L-cysteine + [acceptor protein]-L-lysine = [E2 ubiquitin-conjugating enzyme]-L-cysteine + N(6)-ubiquitinyl-[acceptor protein]-L-lysine.. E3 ubiquitin-protein ligase that plays a role in the regulation of inflammatory response. Mechanistically, mediates the 'Lys-48'-linked polyubiquitination of TAB2, a regulatory protein of the kinase TAK1, leading to its degradation via the proteasomal pathway and inhibition of the TLR-mediated inflammatory immune response. May act as a transcriptional repressor in mitogen-activated protein kinase signaling pathway. This Mus musculus (Mouse) protein is E3 ubiquitin-protein ligase TRIM45 (Trim45).